The following is a 167-amino-acid chain: Small ribosomal subunit protein uS5 (167 aa).

An S5 DRBM domain is found at 12–75 (LQEKLIAVNR…EKARRSMVTI (64 aa)).

This sequence belongs to the universal ribosomal protein uS5 family. As to quaternary structure, part of the 30S ribosomal subunit. Contacts proteins S4 and S8.

With S4 and S12 plays an important role in translational accuracy. Its function is as follows. Located at the back of the 30S subunit body where it stabilizes the conformation of the head with respect to the body. The polypeptide is Small ribosomal subunit protein uS5 (Vibrio cholerae serotype O1 (strain ATCC 39541 / Classical Ogawa 395 / O395)).